A 968-amino-acid polypeptide reads, in one-letter code: MVNSSRVQPQQPGDAKRPPAPRAPDPGRLMAGCAAVGASLAAPGGLCEQRGLEIEMQRIRQAAARDPPAGAAASPSPPLSSCSRQAWSRDNPGFEAEEEEEEVEGEEGGMVVEMDVEWRPGSRRSAASSAVSSVGARSRGLGGYHGAGHPSGRRRRREDQGPPCPSPVGGGDPLHRHLPLEGQPPRVAWAERLVRGLRGLWGTRLMEESSTNREKYLKSVLRELVTYLLFLIVLCILTYGMMSSNVYYYTRMMSQLFLDTPVSKTEKTNFKTLSSMEDFWKFTEGSLLDGLYWKMQPSNQTEADNRSFIFYENLLLGVPRIRQLRVRNGSCSIPQDLRDEIKECYDVYSVSSEDRAPFGPRNGTAWIYTSEKDLNGSSHWGIIATYSGAGYYLDLSRTREETAAQVASLKKNVWLDRGTRATFIDFSVYNANINLFCVVRLLVEFPATGGVIPSWQFQPLKLIRYVTTFDFFLAACEIIFCFFIFYYVVEEILEIRIHKLHYFRSFWNCLDVVIVVLSVVAIGINIYRTSNVEVLLQFLEDQNTFPNFEHLAYWQIQFNNIAAVTVFFVWIKLFKFINFNRTMSQLSTTMSRCAKDLFGFAIMFFIIFLAYAQLAYLVFGTQVDDFSTFQECIFTQFRIILGDINFAEIEEANRVLGPIYFTTFVFFMFFILLNMFLAIINDTYSEVKSDLAQQKAEMELSDLIRKGYHKALVKLKLKKNTVDDISESLRQGGGKLNFDELRQDLKGKGHTDAEIEAIFTKYDQDGDQELTEHEHQQMRDDLEKEREDLDLDHSSLPRPMSSRSFPRSLDDSEEDDDEDSGHSSRRRGSISSGVSYEEFQVLVRRVDRMEHSIGSIVSKIDAVIVKLEIMERAKLKRREVLGRLLDGVAEDERLGRDSEIHREQMERLVREELERWESDDAASQISHGLGTPVGLNGQPRPRSSRPSSSQSTEGMEGAGGNGSSNVHV.

A compositionally biased stretch (polar residues) spans 1-11; it reads MVNSSRVQPQQ. Disordered stretches follow at residues 1-28 and 58-181; these read MVNS…DPGR and RIRQ…LPLE. Topologically, residues 1 to 219 are cytoplasmic; sequence MVNSSRVQPQ…STNREKYLKS (219 aa). A compositionally biased stretch (low complexity) spans 62 to 83; the sequence is AAARDPPAGAAASPSPPLSSCS. Phosphoserine is present on residues Ser76 and Ser80. The span at 95–107 shows a compositional bias: acidic residues; that stretch reads EAEEEEEEVEGEE. Low complexity predominate over residues 123–139; sequence RRSAASSAVSSVGARSR. Omega-N-methylarginine is present on Arg137. The helical transmembrane segment at 220-241 threads the bilayer; that stretch reads VLRELVTYLLFLIVLCILTYGM. Residues 242-468 lie on the Extracellular side of the membrane; sequence MSSNVYYYTR…PLKLIRYVTT (227 aa). Residues Asn299 and Asn305 are each glycosylated (N-linked (GlcNAc...) asparagine). N-linked (GlcNAc...) (complex) asparagine glycosylation is present at Asn328. Cys331 and Cys344 form a disulfide bridge. Asn362 and Asn375 each carry an N-linked (GlcNAc...) asparagine glycan. A helical transmembrane segment spans residues 469 to 489; it reads FDFFLAACEIIFCFFIFYYVV. Residues 490–505 are Cytoplasmic-facing; sequence EEILEIRIHKLHYFRS. The helical transmembrane segment at 506-526 threads the bilayer; sequence FWNCLDVVIVVLSVVAIGINI. At 527–552 the chain is on the extracellular side; it reads YRTSNVEVLLQFLEDQNTFPNFEHLA. A helical membrane pass occupies residues 553–573; sequence YWQIQFNNIAAVTVFFVWIKL. Gln557 is a cholesterol binding site. The Cytoplasmic portion of the chain corresponds to 574 to 597; sequence FKFINFNRTMSQLSTTMSRCAKDL. A helical membrane pass occupies residues 598–619; it reads FGFAIMFFIIFLAYAQLAYLVF. Residues 620-631 lie on the Extracellular side of the membrane; the sequence is GTQVDDFSTFQE. The segment at residues 632 to 646 is an intramembrane region (pore-forming); sequence CIFTQFRIILGDINF. Position 641 (Leu641) interacts with Ca(2+). Residues 641-643 carry the Selectivity filter motif; it reads LGD. The Extracellular portion of the chain corresponds to 647–654; sequence AEIEEANR. Residues 655 to 675 form a helical membrane-spanning segment; that stretch reads VLGPIYFTTFVFFMFFILLNM. At 676 to 968 the chain is on the cytoplasmic side; sequence FLAIINDTYS…GGNGSSNVHV (293 aa). The region spanning 750-785 is the EF-hand domain; that stretch reads HTDAEIEAIFTKYDQDGDQELTEHEHQQMRDDLEKE. Residues Asp763, Asp765, Asp767, Glu769, and Glu774 each contribute to the Ca(2+) site. The disordered stretch occupies residues 764-831; that stretch reads QDGDQELTEH…HSSRRRGSIS (68 aa). Over residues 770-795 the composition is skewed to basic and acidic residues; that stretch reads LTEHEHQQMRDDLEKEREDLDLDHSS. The segment covering 796-807 has biased composition (low complexity); that stretch reads LPRPMSSRSFPR. A phosphoserine mark is found at Ser801, Ser808, Ser812, and Ser829. A linker region spans residues 803 to 822; it reads RSFPRSLDDSEEDDDEDSGH. Residues 810-821 form an important for interaction with PACS1 and PACS2 region; the sequence is DDSEEDDDEDSG. The stretch at 833-872 forms a coiled coil; sequence GVSYEEFQVLVRRVDRMEHSIGSIVSKIDAVIVKLEIMER. A disordered region spans residues 917 to 968; the sequence is ESDDAASQISHGLGTPVGLNGQPRPRSSRPSSSQSTEGMEGAGGNGSSNVHV. The span at 938–951 shows a compositional bias: low complexity; the sequence is QPRPRSSRPSSSQS.

Belongs to the polycystin family. As to quaternary structure, homotetramer. Component of the heterotetrameric polycystin channel complex with PKD1; the tetramer contains one PKD1 chain and three PKD2 chains. Isoform 1 interacts with PKD1 while isoform 3 does not. Interacts with PKD1L1; probably forms a Ca(2+) channel. Interacts with CD2AP. Interacts with HAX1. Interacts with NEK8. Part of a complex containing AKAP5, ADCY5, ADCY6 and PDE4C. Interacts (via C-terminus) with TRPV4 (via C-terminus). Interacts (via C-terminal acidic region) with PACS1 and PACS2; these interactions retain the protein in the endoplasmic reticulum and prevent trafficking to the cell membrane. Interacts with TMEM33. Form a heterotetramer with TRPC1 with a 2:2 stoichiometry; has distinct channel properties separate from PKD2 or TRPC1 homomers alone. Interacts with TMEM120A; TMEM120A inhibits PKD2 channel activity through the physical association of PKD2 with TMEM120A. Interacts (via N-terminus) with RYR2; regulates RYR2 channel activity. Post-translationally, phosphorylated. Phosphorylation is important for protein function; a mutant that lacks the N-terminal phosphorylation sites cannot complement a zebrafish pkd2-deficient mutant. PKD-mediated phosphorylation at the C-terminus regulates its function in the release of Ca(2+) stores from the endoplasmic reticulum. Phosphorylation at Ser-812 regulates PKD2 trafficking. Phosphorylation at Ser-76 is required for PKD2 trafficking to or retention at the lateral plasma membrane. Phosphorylation at Ser-801, Ser-812 and Ser-829 regulates PKD2 channel activity. N-glycosylated. The four subunits in a tetramer probably differ in the extent of glycosylation; simultaneous glycosylation of all experimentally validated sites would probably create steric hindrance. Thus, glycosylation at Asn-305 is not compatible with glycosylation at Asn-328; only one of these two residues is glycosylated at a given time. In terms of processing, sumoylated by SUMO1; sumoylation regulates PKD2 membrane recycling and is necessary for intravascular pressure-induced arterial contractility. Detected in fetal and adult kidney. Detected at the thick ascending limb of the loop of Henle, at distal tubules, including the distal convoluted tubule and cortical collecting tubules, with weak staining of the collecting duct. Detected on placenta syncytiotrophoblasts (at protein level). Strongly expressed in ovary, fetal and adult kidney, testis, and small intestine. Not detected in peripheral leukocytes.

Its subcellular location is the cell projection. It is found in the cilium membrane. The protein localises to the endoplasmic reticulum membrane. The protein resides in the cell membrane. It localises to the basolateral cell membrane. Its subcellular location is the cytoplasmic vesicle membrane. It is found in the golgi apparatus. The protein localises to the vesicle. The protein resides in the secreted. It localises to the extracellular exosome. The catalysed reaction is K(+)(in) = K(+)(out). It catalyses the reaction Na(+)(in) = Na(+)(out). It carries out the reaction Ca(2+)(in) = Ca(2+)(out). Channel activity is regulated by phosphorylation. Channel activity is regulated by intracellular Ca(2+). At the endoplasmic reticulum membrane (ER), TMEM33 enhances its channel activity. TMEM120A inhibits the channel activity of PKD2, and mediates mechanosensitivity of the PKD2-TMEM120A channel complex. PKD1/PKD2 complex on the plasma membrane is activated by PKD1 N-terminus. In terms of biological role, forms a nonselective cation channel. Can function as a homotetrameric ion channel or can form heteromer with PKD1. Displays distinct function depending on its subcellular localization and regulation by its binding partners. In primary cilium functions as a cation channel, with a preference for monovalent cations over divalent cations that allows K(+), Na(+) and Ca(2+) influx, with low selectivity for Ca(2+). Involved in fluid-flow mechanosensation by the primary cilium in renal epithelium. In the endoplasmic reticulum, likely functions as a K(+) channel to facilitate Ca(2+) release. The heterotetrameric PKD1/PKD2 channel has higher Ca(2+) permeability than homomeric PKD2 channel and acts as a primarily Ca(2+)-permeable channel. Interacts with and acts as a regulator of a number of other channels, such as TRPV4, TRPC1, IP3R, RYR2, ultimately further affecting intracellular signaling, to modulate intracellular Ca(2+) signaling. Together with TRPV4, forms mechano- and thermosensitive channels in cilium. In cardiomyocytes, PKD2 modulates Ca(2+) release from stimulated RYR2 receptors through direct association. Also involved in left-right axis specification via its role in sensing nodal flow; forms a complex with PKD1L1 in cilia to facilitate flow detection in left-right patterning. Acts as a regulator of cilium length together with PKD1. Mediates systemic blood pressure and contributes to the myogenic response in cerebral arteries though vasoconstriction. The sequence is that of Polycystin-2 from Homo sapiens (Human).